The sequence spans 676 residues: Methionine--tRNA ligase (676 aa).

Positions 11 to 21 match the 'HIGH' region motif; the sequence is PYANGPCHLGH. Positions 143, 146, 156, and 159 each coordinate Zn(2+). The 'KMSKS' region motif lies at 326–330; it reads KMSTS. Residue Thr-329 coordinates ATP. The tRNA-binding domain occupies 581–676; it reads EFGKVKLVVG…TEGNVGEYIK (96 aa).

This sequence belongs to the class-I aminoacyl-tRNA synthetase family. MetG type 1 subfamily. As to quaternary structure, homodimer. Requires Zn(2+) as cofactor.

The protein localises to the cytoplasm. It carries out the reaction tRNA(Met) + L-methionine + ATP = L-methionyl-tRNA(Met) + AMP + diphosphate. In terms of biological role, is required not only for elongation of protein synthesis but also for the initiation of all mRNA translation through initiator tRNA(fMet) aminoacylation. In Methanosphaera stadtmanae (strain ATCC 43021 / DSM 3091 / JCM 11832 / MCB-3), this protein is Methionine--tRNA ligase.